The chain runs to 425 residues: Putative E3 ubiquitin-protein ligase UBR7 (425 aa).

The UBR-type zinc finger occupies 44 to 116 (EKCSYSQGSV…KNLECKLLPD (73 aa)). The segment at 132–188 (GLYCICKRPYPDPEDEIPDEMIQCVVCEDWFHGRHLGAIPPESGDFQEMVCQACMKR) adopts a PHD-type; atypical zinc-finger fold. Glycyl lysine isopeptide (Lys-Gly) (interchain with G-Cter in SUMO2) cross-links involve residues Lys225 and Lys252. The tract at residues 225–246 (KPENGEHQDSTLKEDVPEQGKD) is disordered. Ser264 carries the post-translational modification Phosphoserine. Residue Lys274 forms a Glycyl lysine isopeptide (Lys-Gly) (interchain with G-Cter in SUMO2) linkage. The residue at position 354 (Ser354) is a Phosphoserine. Residue Lys398 forms a Glycyl lysine isopeptide (Lys-Gly) (interchain with G-Cter in SUMO2) linkage.

As to expression, expressed in sperm (at protein level).

It carries out the reaction S-ubiquitinyl-[E2 ubiquitin-conjugating enzyme]-L-cysteine + [acceptor protein]-L-lysine = [E2 ubiquitin-conjugating enzyme]-L-cysteine + N(6)-ubiquitinyl-[acceptor protein]-L-lysine.. It participates in protein modification; protein ubiquitination. In terms of biological role, E3 ubiquitin-protein ligase which is a component of the N-end rule pathway. Recognizes and binds to proteins bearing specific N-terminal residues that are destabilizing according to the N-end rule, leading to their ubiquitination and subsequent degradation. The polypeptide is Putative E3 ubiquitin-protein ligase UBR7 (UBR7) (Homo sapiens (Human)).